The primary structure comprises 49 residues: Large ribosomal subunit protein bL33B (49 aa).

It belongs to the bacterial ribosomal protein bL33 family.

The polypeptide is Large ribosomal subunit protein bL33B (Limosilactobacillus reuteri subsp. reuteri (strain JCM 1112) (Lactobacillus reuteri)).